The chain runs to 682 residues: MSINSPQYSLPSKKEKQRVRELRKFINHHNYLYYTLDDPEISDSEYDKAFQELLTLENTFPSLKTNNSPTQKVGNNILKKLEEQPHRQRMYSLDNVFSNDEWEGFLKRLANALPEVPFSFWCDPKMDGLALELIYEKGQLTSALTRGDGDIGEVVTEAVRTISNIPKRLKHSINAPELLEIRGEVVISRADFKKLNKEQEKKKKKLFANPRNAASGSVRQLDPTITASRPLRFLAYGIGEIQPSSLKWNTYHELMSYLKEYGFETPPKGKLCISSTEVQSYYTRLQAQRYSLRYEIDGIVMKLDDIQSQEKLGYTSRAPRFAIAWKFPATQVQTRLLQIHIQVGRTGVLTPVAELEPINVGGATISRATLHNEDEIKNKDIRPGDMVIVQRAGDVIPEIVSPILSDRSAKSKPFVFPKICPVCHEKVYRINNEVAWRCINLSCPAIRLQSIIYFVSKSGLNIQGIGQRLIELLVTSGCIKTPADLFTLTTADLLTYKRMGAKLAAKTIQALSLAKQTMSLHRLICALGIRHVGEQTARILASSFIDLDALSSASLEDLQQLSEIGPEVASSIQAFFKNKANIQMINQFREMNIWPIQQVNDTTTKGFFTGKKLLFTGTLERPRAEMKRLAEEAGAIVMTGISHKLDYVIAGKNPGSKLNKAQELHISILDEPTFLQKLLIVL.

NAD(+) is bound by residues 43-47 (DSEYD), 92-93 (SL), and Asp-123. Residue Lys-125 is the N6-AMP-lysine intermediate of the active site. Residues Arg-146, Glu-184, Lys-302, and Lys-326 each contribute to the NAD(+) site. The Zn(2+) site is built by Cys-420, Cys-423, Cys-438, and Cys-443. Positions 603–682 (TTKGFFTGKK…TFLQKLLIVL (80 aa)) constitute a BRCT domain.

This sequence belongs to the NAD-dependent DNA ligase family. LigA subfamily. Requires Mg(2+) as cofactor. The cofactor is Mn(2+).

It catalyses the reaction NAD(+) + (deoxyribonucleotide)n-3'-hydroxyl + 5'-phospho-(deoxyribonucleotide)m = (deoxyribonucleotide)n+m + AMP + beta-nicotinamide D-nucleotide.. In terms of biological role, DNA ligase that catalyzes the formation of phosphodiester linkages between 5'-phosphoryl and 3'-hydroxyl groups in double-stranded DNA using NAD as a coenzyme and as the energy source for the reaction. It is essential for DNA replication and repair of damaged DNA. In Lawsonia intracellularis (strain PHE/MN1-00), this protein is DNA ligase.